Reading from the N-terminus, the 229-residue chain is Flagellar L-ring protein (229 aa).

The first 25 residues, 1 to 25 (MKQVRLPSSATVRAACAVAVAALAG), serve as a signal peptide directing secretion. Cys26 carries the N-palmitoyl cysteine lipid modification. Cys26 is lipidated: S-diacylglycerol cysteine.

This sequence belongs to the FlgH family. As to quaternary structure, the basal body constitutes a major portion of the flagellar organelle and consists of four rings (L,P,S, and M) mounted on a central rod.

It is found in the cell outer membrane. The protein resides in the bacterial flagellum basal body. Assembles around the rod to form the L-ring and probably protects the motor/basal body from shearing forces during rotation. The polypeptide is Flagellar L-ring protein (Burkholderia cenocepacia (strain ATCC BAA-245 / DSM 16553 / LMG 16656 / NCTC 13227 / J2315 / CF5610) (Burkholderia cepacia (strain J2315))).